We begin with the raw amino-acid sequence, 550 residues long: MAGLGASLHVWGWLMLGSCLLARAQLDSDGTITIEEQIVLVLKAKVQCELNITAQLQEGEGNCFPEWDGLICWPRGTVGKISAVPCPPYIYDFNHKGVAFRHCNPNGTWDFMHSLNKTWANYSDCLRFLQPDISIGKQEFFERLYVMYTVGYSISFGSLAVAILIIGYFRRLHCTRNYIHMHLFVSFMLRATSIFVKDRVVHAHIGVKELESLIMQDDPQNSIEATSVDKSQYIGCKIAVVMFIYFLATNYYWILVEGLYLHNLIFVAFFSDTKYLWGFILIGWGFPAAFVAAWAVARATLADARCWELSAGDIKWIYQAPILAAIGLNFILFLNTVRVLATKIWETNAVGHDTRKQYRKLAKSTLVLVLVFGVHYIVFVCLPHSFTGLGWEIRMHCELFFNSFQGFFVSIIYCYCNGEVQAEVKKMWSRWNLSVDWKRTPPCGSRRCGSVLTTVTHSTSSQSQVAASTRMVLISGKAAKIASRQPDSHITLPGYVWSNSEQDCLPHSFHEETKEDSGRQGDDILMEKPSRPMESNPDTEGCQGETEDVL.

The signal sequence occupies residues 1-24 (MAGLGASLHVWGWLMLGSCLLARA). Residues 27–145 (DSDGTITIEE…GKQEFFERLY (119 aa)) lie on the Extracellular side of the membrane. 4 N-linked (GlcNAc...) asparagine glycosylation sites follow: Asn-51, Asn-106, Asn-116, and Asn-121. Residues 146 to 169 (VMYTVGYSISFGSLAVAILIIGYF) form a helical membrane-spanning segment. The Cytoplasmic segment spans residues 170–176 (RRLHCTR). The helical transmembrane segment at 177–196 (NYIHMHLFVSFMLRATSIFV) threads the bilayer. The Extracellular segment spans residues 197-237 (KDRVVHAHIGVKELESLIMQDDPQNSIEATSVDKSQYIGCK). A helical membrane pass occupies residues 238–260 (IAVVMFIYFLATNYYWILVEGLY). Residues 261–275 (LHNLIFVAFFSDTKY) are Cytoplasmic-facing. Residues 276–297 (LWGFILIGWGFPAAFVAAWAVA) traverse the membrane as a helical segment. Residues 298–316 (RATLADARCWELSAGDIKW) are Extracellular-facing. A helical membrane pass occupies residues 317–337 (IYQAPILAAIGLNFILFLNTV). The Cytoplasmic segment spans residues 338–364 (RVLATKIWETNAVGHDTRKQYRKLAKS). Residues 365–383 (TLVLVLVFGVHYIVFVCLP) form a helical membrane-spanning segment. The Extracellular portion of the chain corresponds to 384-394 (HSFTGLGWEIR). Residues 395-417 (MHCELFFNSFQGFFVSIIYCYCN) form a helical membrane-spanning segment. Topologically, residues 418–550 (GEVQAEVKKM…GCQGETEDVL (133 aa)) are cytoplasmic. The span at 511 to 531 (EETKEDSGRQGDDILMEKPSR) shows a compositional bias: basic and acidic residues. Residues 511-550 (EETKEDSGRQGDDILMEKPSRPMESNPDTEGCQGETEDVL) are disordered.

Belongs to the G-protein coupled receptor 2 family. Binds to TIPF39/TIP39. As to expression, expressed abundantly in brain and pancreas. Also expressed in the testis.

Its subcellular location is the cell membrane. This is a specific receptor for parathyroid hormone. The activity of this receptor is mediated by G proteins which activate adenylyl cyclase. PTH2R may be responsible for PTH effects in a number of physiological systems. It may play a significant role in pancreatic function. PTH2R presence in neurons indicates that it may function as a neurotransmitter receptor. The polypeptide is Parathyroid hormone 2 receptor (PTH2R) (Homo sapiens (Human)).